The primary structure comprises 625 residues: DNA mismatch repair protein MutL (625 aa).

It belongs to the DNA mismatch repair MutL/HexB family.

This protein is involved in the repair of mismatches in DNA. It is required for dam-dependent methyl-directed DNA mismatch repair. May act as a 'molecular matchmaker', a protein that promotes the formation of a stable complex between two or more DNA-binding proteins in an ATP-dependent manner without itself being part of a final effector complex. In Bacteroides fragilis (strain YCH46), this protein is DNA mismatch repair protein MutL.